The primary structure comprises 281 residues: sn-glycerol-3-phosphate transport system permease protein UgpE (281 aa).

6 consecutive transmembrane segments (helical) span residues 16–36 (LILGIAVILFPLYVAFVAATL), 85–105 (FSITLGKITVSMLSAFAIVWF), 113–133 (FFWMIFITLMLPVEVRIFPTV), 142–162 (LDSYAGLTLPLMASATATFLF), 202–222 (ALFVITFIYGWNQYLWPLLII), and 247–267 (WNSVMAAMLLTLIPPVVIVLV). Positions 77–268 (LLNSFVMAFS…IPPVVIVLVM (192 aa)) constitute an ABC transmembrane type-1 domain.

The protein belongs to the binding-protein-dependent transport system permease family. UgpAE subfamily. In terms of assembly, the complex is composed of two ATP-binding proteins (UgpC), two transmembrane proteins (UgpA and UgpE) and a solute-binding protein (UgpB).

It localises to the cell inner membrane. In terms of biological role, part of the ABC transporter complex UgpBAEC involved in sn-glycerol-3-phosphate (G3P) import. Probably responsible for the translocation of the substrate across the membrane. This is sn-glycerol-3-phosphate transport system permease protein UgpE (ugpE) from Escherichia coli O6:K15:H31 (strain 536 / UPEC).